The following is a 385-amino-acid chain: Phosphate acyltransferase (385 aa).

A compositionally biased stretch (low complexity) spans 1–17 (MAAGTSIGTTPGGSTSP). Positions 1–28 (MAAGTSIGTTPGGSTSPETPPEHGLTGT) are disordered.

This sequence belongs to the PlsX family. Homodimer. Probably interacts with PlsY.

Its subcellular location is the cytoplasm. It catalyses the reaction a fatty acyl-[ACP] + phosphate = an acyl phosphate + holo-[ACP]. Its pathway is lipid metabolism; phospholipid metabolism. Catalyzes the reversible formation of acyl-phosphate (acyl-PO(4)) from acyl-[acyl-carrier-protein] (acyl-ACP). This enzyme utilizes acyl-ACP as fatty acyl donor, but not acyl-CoA. The protein is Phosphate acyltransferase of Dinoroseobacter shibae (strain DSM 16493 / NCIMB 14021 / DFL 12).